Consider the following 477-residue polypeptide: GTPase Der (477 aa).

EngA-type G domains follow at residues 3–167 (LTIA…GKER) and 206–382 (LRIA…RMWN). Residues 9 to 16 (GRPNVGKS), 56 to 60 (DTAGL), 119 to 122 (NKSE), 212 to 219 (GRPNTGKS), 259 to 263 (DTAGL), and 324 to 327 (NKWD) each bind GTP. Positions 383–467 (RRISTAKLNR…PIRISLRASD (85 aa)) constitute a KH-like domain.

This sequence belongs to the TRAFAC class TrmE-Era-EngA-EngB-Septin-like GTPase superfamily. EngA (Der) GTPase family. As to quaternary structure, associates with the 50S ribosomal subunit.

Its function is as follows. GTPase that plays an essential role in the late steps of ribosome biogenesis. This Bartonella quintana (strain Toulouse) (Rochalimaea quintana) protein is GTPase Der.